Here is a 504-residue protein sequence, read N- to C-terminus: Arrestin-related trafficking adapter 10 (504 aa).

The protein belongs to the ART10 family.

Its subcellular location is the cytoplasm. Its function is as follows. May regulate endocytosis by recruiting RSP5 ubiquitin ligase activity to specific plasma membrane proteins in response to extracellular stimuli. This chain is Arrestin-related trafficking adapter 10 (ART10), found in Candida glabrata (strain ATCC 2001 / BCRC 20586 / JCM 3761 / NBRC 0622 / NRRL Y-65 / CBS 138) (Yeast).